The primary structure comprises 160 residues: Cytochrome b6-f complex subunit 4 (160 aa).

The next 3 membrane-spanning stretches (helical) occupy residues leucine 36–valine 56, leucine 95–glutamate 115, and threonine 131–isoleucine 151.

The protein belongs to the cytochrome b family. PetD subfamily. In terms of assembly, the 4 large subunits of the cytochrome b6-f complex are cytochrome b6, subunit IV (17 kDa polypeptide, petD), cytochrome f and the Rieske protein, while the 4 small subunits are petG, petL, petM and petN. The complex functions as a dimer.

Its subcellular location is the plastid. It localises to the chloroplast thylakoid membrane. Its function is as follows. Component of the cytochrome b6-f complex, which mediates electron transfer between photosystem II (PSII) and photosystem I (PSI), cyclic electron flow around PSI, and state transitions. In Marchantia polymorpha (Common liverwort), this protein is Cytochrome b6-f complex subunit 4.